The chain runs to 219 residues: Thiamine-phosphate synthase (219 aa).

Residues 45–49 and asparagine 77 contribute to the 4-amino-2-methyl-5-(diphosphooxymethyl)pyrimidine site; that span reads QYREK. Mg(2+) contacts are provided by aspartate 78 and aspartate 97. Threonine 116 lines the 4-amino-2-methyl-5-(diphosphooxymethyl)pyrimidine pocket. 142–144 provides a ligand contact to 2-[(2R,5Z)-2-carboxy-4-methylthiazol-5(2H)-ylidene]ethyl phosphate; that stretch reads SFT. Residue lysine 145 coordinates 4-amino-2-methyl-5-(diphosphooxymethyl)pyrimidine. 2-[(2R,5Z)-2-carboxy-4-methylthiazol-5(2H)-ylidene]ethyl phosphate-binding positions include glycine 173 and 193-194; that span reads VT.

It belongs to the thiamine-phosphate synthase family. Requires Mg(2+) as cofactor.

The catalysed reaction is 2-[(2R,5Z)-2-carboxy-4-methylthiazol-5(2H)-ylidene]ethyl phosphate + 4-amino-2-methyl-5-(diphosphooxymethyl)pyrimidine + 2 H(+) = thiamine phosphate + CO2 + diphosphate. It catalyses the reaction 2-(2-carboxy-4-methylthiazol-5-yl)ethyl phosphate + 4-amino-2-methyl-5-(diphosphooxymethyl)pyrimidine + 2 H(+) = thiamine phosphate + CO2 + diphosphate. The enzyme catalyses 4-methyl-5-(2-phosphooxyethyl)-thiazole + 4-amino-2-methyl-5-(diphosphooxymethyl)pyrimidine + H(+) = thiamine phosphate + diphosphate. Its pathway is cofactor biosynthesis; thiamine diphosphate biosynthesis; thiamine phosphate from 4-amino-2-methyl-5-diphosphomethylpyrimidine and 4-methyl-5-(2-phosphoethyl)-thiazole: step 1/1. Functionally, condenses 4-methyl-5-(beta-hydroxyethyl)thiazole monophosphate (THZ-P) and 2-methyl-4-amino-5-hydroxymethyl pyrimidine pyrophosphate (HMP-PP) to form thiamine monophosphate (TMP). The polypeptide is Thiamine-phosphate synthase (Caldicellulosiruptor bescii (strain ATCC BAA-1888 / DSM 6725 / KCTC 15123 / Z-1320) (Anaerocellum thermophilum)).